The sequence spans 268 residues: Zinc import ATP-binding protein ZnuC (268 aa).

Residues 16 to 231 (IQLKNINVVF…PTFMRLWGNQ (216 aa)) form the ABC transporter domain. 48-55 (GPNGGGKS) is a binding site for ATP.

The protein belongs to the ABC transporter superfamily. Zinc importer (TC 3.A.1.15.5) family. In terms of assembly, the complex is composed of two ATP-binding proteins (ZnuC), two transmembrane proteins (ZnuB) and a solute-binding protein (ZnuA).

Its subcellular location is the cell inner membrane. The enzyme catalyses Zn(2+)(out) + ATP(in) + H2O(in) = Zn(2+)(in) + ADP(in) + phosphate(in) + H(+)(in). Part of the ABC transporter complex ZnuABC involved in zinc import. Responsible for energy coupling to the transport system. In Haemophilus influenzae (strain ATCC 51907 / DSM 11121 / KW20 / Rd), this protein is Zinc import ATP-binding protein ZnuC.